A 248-amino-acid chain; its full sequence is NAD(P)H-quinone oxidoreductase subunit K (248 aa).

4 residues coordinate [4Fe-4S] cluster: C66, C67, C131, and C162.

Belongs to the complex I 20 kDa subunit family. NDH-1 can be composed of about 15 different subunits; different subcomplexes with different compositions have been identified which probably have different functions. It depends on [4Fe-4S] cluster as a cofactor.

It localises to the cellular thylakoid membrane. The enzyme catalyses a plastoquinone + NADH + (n+1) H(+)(in) = a plastoquinol + NAD(+) + n H(+)(out). The catalysed reaction is a plastoquinone + NADPH + (n+1) H(+)(in) = a plastoquinol + NADP(+) + n H(+)(out). Its function is as follows. NDH-1 shuttles electrons from an unknown electron donor, via FMN and iron-sulfur (Fe-S) centers, to quinones in the respiratory and/or the photosynthetic chain. The immediate electron acceptor for the enzyme in this species is believed to be plastoquinone. Couples the redox reaction to proton translocation, and thus conserves the redox energy in a proton gradient. Cyanobacterial NDH-1 also plays a role in inorganic carbon-concentration. This Synechococcus sp. (strain WH7803) protein is NAD(P)H-quinone oxidoreductase subunit K.